We begin with the raw amino-acid sequence, 347 residues long: (RS)-norcoclaurine 6-O-methyltransferase (347 aa).

Residues G192, D215, D235, M236, and K249 each coordinate S-adenosyl-L-methionine. The Proton acceptor role is filled by H253.

It belongs to the class I-like SAM-binding methyltransferase superfamily. Cation-independent O-methyltransferase family. COMT subfamily. In terms of assembly, homodimer.

The enzyme catalyses norcoclaurine + S-adenosyl-L-methionine = coclaurine + S-adenosyl-L-homocysteine + H(+). It participates in alkaloid biosynthesis; (S)-reticuline biosynthesis; (S)-reticuline from (S)-norcoclaurine: step 1/4. In terms of biological role, catalyzes the transfer of the S-methyl group of S-adenosyl-L-methionine (AdoMet) to the 6-hydroxyl group of norcoclaurine to form coclaurine. The polypeptide is (RS)-norcoclaurine 6-O-methyltransferase (Coptis japonica (Japanese goldthread)).